The sequence spans 187 residues: Shikimate kinase (187 aa).

19-24 provides a ligand contact to ATP; the sequence is GSGKST. Ser-23 lines the Mg(2+) pocket. Substrate contacts are provided by Asp-41, Arg-65, and Gly-87. Arg-124 is an ATP binding site. Arg-143 serves as a coordination point for substrate. ATP is bound at residue Arg-160.

The protein belongs to the shikimate kinase family. Monomer. Requires Mg(2+) as cofactor.

The protein localises to the cytoplasm. It carries out the reaction shikimate + ATP = 3-phosphoshikimate + ADP + H(+). It participates in metabolic intermediate biosynthesis; chorismate biosynthesis; chorismate from D-erythrose 4-phosphate and phosphoenolpyruvate: step 5/7. Functionally, catalyzes the specific phosphorylation of the 3-hydroxyl group of shikimic acid using ATP as a cosubstrate. The protein is Shikimate kinase of Rippkaea orientalis (strain PCC 8801 / RF-1) (Cyanothece sp. (strain PCC 8801)).